The sequence spans 883 residues: Pre-mRNA-splicing factor syf1 homolog (883 aa).

12 HAT repeats span residues 13–45 (INFE…HKAK), 46–78 (APNN…TRRK), 88–120 (PMYE…FMTS), 122–156 (CKIT…FVRR), 158–190 (EMPE…EADR), 268–303 (GLFD…FEEL), 368–406 (DKPA…FYEA), 463–495 (KRKI…LEES), 531–565 (NYFE…KFLE), 570–604 (TKLE…LEEE), 642–676 (YGLP…LETK), and 678–712 (GEVD…FEVR). Disordered regions lie at residues 794 to 851 (RGET…DEEG) and 864 to 883 (IPAK…SDGE). Over residues 812–834 (DEIDIGDSDEDDEEEDDDEENEM) the composition is skewed to acidic residues. Polar residues-rich tracts occupy residues 835 to 844 (TNENQASAAV) and 873 to 883 (KPSNQGDSDGE).

This sequence belongs to the crooked-neck family. In terms of assembly, component of the NTC(Nineteen)/Prp19 complex composed of at least fand, Prp19,CG9667/ISY1 and Cdc5/CDC5L. Within the complex, interacts with Prp19 and ISY1/CG9667.

The protein localises to the nucleus. Subunit of the NTC(Nineteen)/Prp19 complex, which is part of the spliceosome. The complex participates in spliceosome assembly, its remodeling and is required for efficient spliceosome activation. Essential for efficient pre-mRNA splicing. In embryos, efficient pre-mRNA splicing of zygotic transcripts is essential during dynamic cellular processes that require rapid division and/or dramatic changes in gene expression such as blastoderm cellularization, tracheal branching morphogenesis, Malpighian morphogenesis and epidermal development. Part of its role in promoting embryo tracheal development is also due to specifically splicing bnl transcripts which results in the activation of the BNL-FGF pathway. The protein is Pre-mRNA-splicing factor syf1 homolog of Drosophila melanogaster (Fruit fly).